The following is a 362-amino-acid chain: HMG box-containing protein C19G7.04 (362 aa).

Positions 135–299 (KCFLARLEDE…RLCKSQIKQI (165 aa)) constitute a SprT-like domain. The HMG box DNA-binding region spans 306 to 348 (PNAFQIFLKENSKRLRKLHPHITHKELMKKLSDEYHRTKDAKQ).

The protein localises to the nucleus. It is found in the cytoplasm. The protein resides in the cytoskeleton. It localises to the spindle. This chain is HMG box-containing protein C19G7.04, found in Schizosaccharomyces pombe (strain 972 / ATCC 24843) (Fission yeast).